The chain runs to 93 residues: Small ribosomal subunit protein uS19 (93 aa).

Belongs to the universal ribosomal protein uS19 family.

Its function is as follows. Protein S19 forms a complex with S13 that binds strongly to the 16S ribosomal RNA. The polypeptide is Small ribosomal subunit protein uS19 (Rhodococcus erythropolis (strain PR4 / NBRC 100887)).